The sequence spans 633 residues: Glutamyl-tRNA(Gln) amidotransferase subunit E (633 aa).

It belongs to the GatB/GatE family. GatE subfamily. As to quaternary structure, heterodimer of GatD and GatE.

It catalyses the reaction L-glutamyl-tRNA(Gln) + L-glutamine + ATP + H2O = L-glutaminyl-tRNA(Gln) + L-glutamate + ADP + phosphate + H(+). Its function is as follows. Allows the formation of correctly charged Gln-tRNA(Gln) through the transamidation of misacylated Glu-tRNA(Gln) in organisms which lack glutaminyl-tRNA synthetase. The reaction takes place in the presence of glutamine and ATP through an activated gamma-phospho-Glu-tRNA(Gln). The GatDE system is specific for glutamate and does not act on aspartate. The chain is Glutamyl-tRNA(Gln) amidotransferase subunit E from Methanosarcina acetivorans (strain ATCC 35395 / DSM 2834 / JCM 12185 / C2A).